Here is a 30-residue protein sequence, read N- to C-terminus: Kalata-B10 (30 aa).

Residues 1–30 (GLPTCGETCFGGTCNTPGCSCSSWPICTRD) constitute a cross-link (cyclopeptide (Gly-Asp)). 3 disulfides stabilise this stretch: cysteine 5/cysteine 19, cysteine 9/cysteine 21, and cysteine 14/cysteine 27.

Belongs to the cyclotide family. Moebius subfamily. This peptide occurs in both cyclic and linear forms. The linear form contains unmodified Trp-24, the cyclic peptide occurs in two forms with unmodified Trp-24, and with Trp-24 oxidized to form oxindolylalanine. Oxidation is enhanced by exposure to sunlight.

In terms of biological role, probably participates in a plant defense mechanism. This Oldenlandia affinis protein is Kalata-B10.